The primary structure comprises 490 residues: GTPase Der (490 aa).

2 consecutive EngA-type G domains span residues proline 3–methionine 166 and isoleucine 200–threonine 373. Residues glycine 9–serine 16, aspartate 56–isoleucine 60, asparagine 118–aspartate 121, glycine 206–serine 213, aspartate 253–valine 257, and asparagine 318–aspartate 321 contribute to the GTP site. Positions arginine 374–glycine 458 constitute a KH-like domain. The interval threonine 470–aspartate 490 is disordered.

It belongs to the TRAFAC class TrmE-Era-EngA-EngB-Septin-like GTPase superfamily. EngA (Der) GTPase family. In terms of assembly, associates with the 50S ribosomal subunit.

Its function is as follows. GTPase that plays an essential role in the late steps of ribosome biogenesis. This chain is GTPase Der, found in Shewanella pealeana (strain ATCC 700345 / ANG-SQ1).